Reading from the N-terminus, the 79-residue chain is NAD(P)H-quinone oxidoreductase subunit L (79 aa).

2 consecutive transmembrane segments (helical) span residues 10 to 30 and 48 to 68; these read IIIALIYLSLSVLYLLVIPAV and GFMYFLMSFFFPGMLLLSPFL.

This sequence belongs to the complex I NdhL subunit family. As to quaternary structure, NDH-1 can be composed of about 15 different subunits; different subcomplexes with different compositions have been identified which probably have different functions.

The protein resides in the cellular thylakoid membrane. The enzyme catalyses a plastoquinone + NADH + (n+1) H(+)(in) = a plastoquinol + NAD(+) + n H(+)(out). It carries out the reaction a plastoquinone + NADPH + (n+1) H(+)(in) = a plastoquinol + NADP(+) + n H(+)(out). Functionally, NDH-1 shuttles electrons from an unknown electron donor, via FMN and iron-sulfur (Fe-S) centers, to quinones in the respiratory and/or the photosynthetic chain. The immediate electron acceptor for the enzyme in this species is believed to be plastoquinone. Couples the redox reaction to proton translocation, and thus conserves the redox energy in a proton gradient. Cyanobacterial NDH-1 also plays a role in inorganic carbon-concentration. The protein is NAD(P)H-quinone oxidoreductase subunit L of Microcystis aeruginosa (strain NIES-843 / IAM M-2473).